The chain runs to 433 residues: MAKIINIIGREIMDSRGNPTVEAEVHLEGGFMGMAAAPSGASTGSREALELRDGDKARYLGKGVLKAVEAVNGTIADALIGKDATAQAELDQIMIDLDGTENKAKFGANAILAVSLAAAKAAAAFKGVPLYAHIADLNGTPGVYSMPLPMMNIINGGEHADNSVDIQEFMIQPVGAANFREGLRMGAEVFHSLAKVLKADGHSTAVGDEGGFAPNLPSNASALAAIKVAVANAGYELGKDITLAMDCAASEFYDKEANIYDLKGEGKKFTSEEFNFFLQDLTKEYPIVSIEDGLDESDWDGFAHQTKLMGDKIQLVGDDLFVTNTKILKRGIDNGIANSILIKFNQIGSLTETLAAIKMAKDAGFTVVISHRSGETEDATIADLAVGTAAGQIKTGSLSRSDRVAKYNQLLRIEEQLGEKAPYKGLKEVKGQA.

Glutamine 167 contacts (2R)-2-phosphoglycerate. Glutamate 209 functions as the Proton donor in the catalytic mechanism. Positions 246, 291, and 318 each coordinate Mg(2+). (2R)-2-phosphoglycerate is bound by residues lysine 343, arginine 372, serine 373, and lysine 394. Lysine 343 functions as the Proton acceptor in the catalytic mechanism.

The protein belongs to the enolase family. Component of the RNA degradosome, a multiprotein complex involved in RNA processing and mRNA degradation. The cofactor is Mg(2+).

Its subcellular location is the cytoplasm. It localises to the secreted. It is found in the cell surface. The enzyme catalyses (2R)-2-phosphoglycerate = phosphoenolpyruvate + H2O. Its pathway is carbohydrate degradation; glycolysis; pyruvate from D-glyceraldehyde 3-phosphate: step 4/5. Catalyzes the reversible conversion of 2-phosphoglycerate (2-PG) into phosphoenolpyruvate (PEP). It is essential for the degradation of carbohydrates via glycolysis. In Shewanella piezotolerans (strain WP3 / JCM 13877), this protein is Enolase.